The sequence spans 211 residues: Thymidylate kinase (211 aa).

7-14 is an ATP binding site; the sequence is GMDGSGKT.

It belongs to the thymidylate kinase family.

The enzyme catalyses dTMP + ATP = dTDP + ADP. Its function is as follows. Phosphorylation of dTMP to form dTDP in both de novo and salvage pathways of dTTP synthesis. This is Thymidylate kinase from Mesoplasma florum (strain ATCC 33453 / NBRC 100688 / NCTC 11704 / L1) (Acholeplasma florum).